We begin with the raw amino-acid sequence, 314 residues long: S-methyl-5'-thioadenosine phosphorylase (314 aa).

Phosphate-binding positions include S31, 73-74 (RH), and 106-107 (SA). M207 lines the substrate pocket. Residue T208 participates in phosphate binding. Residue 231–233 (DYD) participates in substrate binding.

It belongs to the PNP/MTAP phosphorylase family. MTAP subfamily. In terms of assembly, homohexamer. Dimer of a homotrimer.

It catalyses the reaction S-methyl-5'-thioadenosine + phosphate = 5-(methylsulfanyl)-alpha-D-ribose 1-phosphate + adenine. Its pathway is amino-acid biosynthesis; L-methionine biosynthesis via salvage pathway; S-methyl-5-thio-alpha-D-ribose 1-phosphate from S-methyl-5'-thioadenosine (phosphorylase route): step 1/1. Functionally, catalyzes the reversible phosphorylation of S-methyl-5'-thioadenosine (MTA) to adenine and 5-methylthioribose-1-phosphate. Involved in the breakdown of MTA, a major by-product of polyamine biosynthesis. Responsible for the first step in the methionine salvage pathway after MTA has been generated from S-adenosylmethionine. Has broad substrate specificity with 6-aminopurine nucleosides as preferred substrates. This chain is S-methyl-5'-thioadenosine phosphorylase, found in Prochlorococcus marinus (strain SARG / CCMP1375 / SS120).